The following is a 403-amino-acid chain: Phosphopentomutase (403 aa).

The Mn(2+) site is built by Asp-13, Asp-298, His-303, Asp-339, His-340, and His-351.

The protein belongs to the phosphopentomutase family. Mn(2+) serves as cofactor.

It localises to the cytoplasm. It catalyses the reaction 2-deoxy-alpha-D-ribose 1-phosphate = 2-deoxy-D-ribose 5-phosphate. The catalysed reaction is alpha-D-ribose 1-phosphate = D-ribose 5-phosphate. Its pathway is carbohydrate degradation; 2-deoxy-D-ribose 1-phosphate degradation; D-glyceraldehyde 3-phosphate and acetaldehyde from 2-deoxy-alpha-D-ribose 1-phosphate: step 1/2. Functionally, isomerase that catalyzes the conversion of deoxy-ribose 1-phosphate (dRib-1-P) and ribose 1-phosphate (Rib-1-P) to deoxy-ribose 5-phosphate (dRib-5-P) and ribose 5-phosphate (Rib-5-P), respectively. This is Phosphopentomutase from Streptococcus pneumoniae (strain JJA).